Here is a 351-residue protein sequence, read N- to C-terminus: Uroporphyrinogen decarboxylase (351 aa).

Substrate-binding positions include arginine 25–arginine 29, aspartate 74, tyrosine 151, serine 206, and histidine 325.

Belongs to the uroporphyrinogen decarboxylase family. As to quaternary structure, homodimer.

It localises to the cytoplasm. The enzyme catalyses uroporphyrinogen III + 4 H(+) = coproporphyrinogen III + 4 CO2. It functions in the pathway porphyrin-containing compound metabolism; protoporphyrin-IX biosynthesis; coproporphyrinogen-III from 5-aminolevulinate: step 4/4. Functionally, catalyzes the decarboxylation of four acetate groups of uroporphyrinogen-III to yield coproporphyrinogen-III. The polypeptide is Uroporphyrinogen decarboxylase (Chlorobium phaeovibrioides (strain DSM 265 / 1930) (Prosthecochloris vibrioformis (strain DSM 265))).